We begin with the raw amino-acid sequence, 231 residues long: 5'-methylthioadenosine/S-adenosylhomocysteine nucleosidase (231 aa).

Catalysis depends on glutamate 12, which acts as the Proton acceptor. Substrate is bound by residues glycine 78, isoleucine 153, and 174 to 175; that span reads ME. Catalysis depends on aspartate 198, which acts as the Proton donor.

The protein belongs to the PNP/UDP phosphorylase family. MtnN subfamily.

The enzyme catalyses S-adenosyl-L-homocysteine + H2O = S-(5-deoxy-D-ribos-5-yl)-L-homocysteine + adenine. It catalyses the reaction S-methyl-5'-thioadenosine + H2O = 5-(methylsulfanyl)-D-ribose + adenine. The catalysed reaction is 5'-deoxyadenosine + H2O = 5-deoxy-D-ribose + adenine. Its pathway is amino-acid biosynthesis; L-methionine biosynthesis via salvage pathway; S-methyl-5-thio-alpha-D-ribose 1-phosphate from S-methyl-5'-thioadenosine (hydrolase route): step 1/2. Functionally, catalyzes the irreversible cleavage of the glycosidic bond in both 5'-methylthioadenosine (MTA) and S-adenosylhomocysteine (SAH/AdoHcy) to adenine and the corresponding thioribose, 5'-methylthioribose and S-ribosylhomocysteine, respectively. Also cleaves 5'-deoxyadenosine, a toxic by-product of radical S-adenosylmethionine (SAM) enzymes, into 5-deoxyribose and adenine. This chain is 5'-methylthioadenosine/S-adenosylhomocysteine nucleosidase, found in Shewanella putrefaciens (strain CN-32 / ATCC BAA-453).